The primary structure comprises 642 residues: Threonine--tRNA ligase (642 aa).

Residues 1–61 form the TGS domain; sequence MIKVTFPDGN…EHDGKLQLLT (61 aa). The interval 240–539 is catalytic; that stretch reads DHRKIGKDLD…LIEEYKGSFP (300 aa). The Zn(2+) site is built by C334, H385, and H516.

The protein belongs to the class-II aminoacyl-tRNA synthetase family. Homodimer. Requires Zn(2+) as cofactor.

The protein localises to the cytoplasm. It carries out the reaction tRNA(Thr) + L-threonine + ATP = L-threonyl-tRNA(Thr) + AMP + diphosphate + H(+). Its function is as follows. Catalyzes the attachment of threonine to tRNA(Thr) in a two-step reaction: L-threonine is first activated by ATP to form Thr-AMP and then transferred to the acceptor end of tRNA(Thr). Also edits incorrectly charged L-seryl-tRNA(Thr). The protein is Threonine--tRNA ligase of Acholeplasma laidlawii (strain PG-8A).